We begin with the raw amino-acid sequence, 469 residues long: Acetyl-CoA decarbonylase/synthase complex subunit beta 1 (469 aa).

Residues Cys189, Cys192, Cys278, and Cys280 each coordinate [Ni-Fe-S] cluster.

It belongs to the CdhC family. Monomer. The ACDS complex is made up of alpha, epsilon, beta, gamma and delta chains with a probable stoichiometry of (alpha(2)epsilon(2))(4)-beta(8)-(gamma(1)delta(1))(8) (Potential). The cofactor is [Ni-Fe-S] cluster.

It catalyses the reaction Co(I)-[corrinoid Fe-S protein] + acetyl-CoA + H(+) = methyl-Co(III)-[corrinoid Fe-S protein] + CO + CoA. Its pathway is one-carbon metabolism; methanogenesis from acetate. Functionally, part of a complex that catalyzes the reversible cleavage of acetyl-CoA, allowing growth on acetate as sole source of carbon and energy. The alpha-epsilon complex generates CO from CO(2), while the beta subunit (this protein) combines the CO with CoA and a methyl group to form acetyl-CoA. The methyl group, which is incorporated into acetyl-CoA, is transferred to the beta subunit by a corrinoid iron-sulfur protein (the gamma-delta complex). The protein is Acetyl-CoA decarbonylase/synthase complex subunit beta 1 (cdhC1) of Methanosarcina acetivorans (strain ATCC 35395 / DSM 2834 / JCM 12185 / C2A).